We begin with the raw amino-acid sequence, 466 residues long: Ribulose bisphosphate carboxylase large chain (466 aa).

K5 carries the N6,N6,N6-trimethyllysine modification. Residues N114 and T164 each coordinate substrate. K166 functions as the Proton acceptor in the catalytic mechanism. K168 provides a ligand contact to substrate. Mg(2+) is bound by residues K192, D194, and E195. The residue at position 192 (K192) is an N6-carboxylysine. The active-site Proton acceptor is the H285. The substrate site is built by R286, H318, and S370.

The protein belongs to the RuBisCO large chain family. Type I subfamily. In terms of assembly, heterohexadecamer of 8 large chains and 8 small chains; disulfide-linked. The disulfide link is formed within the large subunit homodimers. The cofactor is Mg(2+). In terms of processing, the disulfide bond which can form in the large chain dimeric partners within the hexadecamer appears to be associated with oxidative stress and protein turnover.

It is found in the plastid. The protein localises to the chloroplast. It carries out the reaction 2 (2R)-3-phosphoglycerate + 2 H(+) = D-ribulose 1,5-bisphosphate + CO2 + H2O. The catalysed reaction is D-ribulose 1,5-bisphosphate + O2 = 2-phosphoglycolate + (2R)-3-phosphoglycerate + 2 H(+). Functionally, ruBisCO catalyzes two reactions: the carboxylation of D-ribulose 1,5-bisphosphate, the primary event in carbon dioxide fixation, as well as the oxidative fragmentation of the pentose substrate in the photorespiration process. Both reactions occur simultaneously and in competition at the same active site. The polypeptide is Ribulose bisphosphate carboxylase large chain (Bixa orellana (Lipstick tree)).